Reading from the N-terminus, the 391-residue chain is Nuclear hormone receptor family member nhr-218 (391 aa).

The segment at residues 17 to 93 (PIPCQICTYQ…MGMKAEKIQQ (77 aa)) is a DNA-binding region (nuclear receptor). 2 NR C4-type zinc fingers span residues 20–40 (CQICTYQSHGVNFNVMTCRAC) and 56–76 (CKTRKNDCRIDSTERHFCRLC). An NR LBD domain is found at 146–391 (SRNYSDSPLT…DNFCNLFAMK (246 aa)).

This sequence belongs to the nuclear hormone receptor family.

It is found in the nucleus. In terms of biological role, orphan nuclear receptor. The chain is Nuclear hormone receptor family member nhr-218 (nhr-218) from Caenorhabditis elegans.